A 202-amino-acid chain; its full sequence is Holliday junction resolvase RecU (202 aa).

Mg(2+) is bound by residues Thr85, Asp87, Glu100, and Gln119.

Belongs to the RecU family. Requires Mg(2+) as cofactor.

It localises to the cytoplasm. It carries out the reaction Endonucleolytic cleavage at a junction such as a reciprocal single-stranded crossover between two homologous DNA duplexes (Holliday junction).. Its function is as follows. Endonuclease that resolves Holliday junction intermediates in genetic recombination. Cleaves mobile four-strand junctions by introducing symmetrical nicks in paired strands. Promotes annealing of linear ssDNA with homologous dsDNA. Required for DNA repair, homologous recombination and chromosome segregation. The protein is Holliday junction resolvase RecU of Streptococcus equi subsp. equi (strain 4047).